A 315-amino-acid chain; its full sequence is MQCNDVQATEPDIKVSLTRVGVTNLKKLVKLKRKNKRDIVLLPTFEVFVDLPSSQKGIHMSRSPEVIEEVVENILLEKEIYGVEDLSVEIVMKLFEKHEYATRAEVMLYSDYMMEEKSPVTKKDSQEIGKIIARAYGVKDSNGKIDVKKMVGAEVVGITACPCAQNMLKENAVVSLTEKGFSSEDIEKILDSVTIATHNQRGIGTVMIEVPNGYTVGISKIIKIIKDSMSGEVYELLKRSDEAFVVEAAHKNPKFVEDCAREMIKRVVDVFDYLPEDTQVLVRQVNKESIHRHDAFAERNSTIRELRDELKTLTN.

Belongs to the GTP cyclohydrolase IV family. As to quaternary structure, homodimer. Fe(2+) serves as cofactor.

It catalyses the reaction GTP + H2O = 7,8-dihydroneopterin 2',3'-cyclic phosphate + formate + diphosphate + H(+). Its pathway is cofactor biosynthesis; 5,6,7,8-tetrahydromethanopterin biosynthesis. Its function is as follows. Converts GTP to 7,8-dihydro-D-neopterin 2',3'-cyclic phosphate, the first intermediate in the biosynthesis of coenzyme methanopterin. The sequence is that of GTP cyclohydrolase MptA from Methanococcus maripaludis (strain DSM 14266 / JCM 13030 / NBRC 101832 / S2 / LL).